Here is a 395-residue protein sequence, read N- to C-terminus: Aurora kinase A (395 aa).

A disordered region spans residues 1 to 114; sequence MDRCKENCVS…QASLQKTEDT (114 aa). Polar residues-rich tracts occupy residues 29 to 60 and 84 to 99; these read QIPSQNLGSASSGQAQRVLCPSNSQRVPSQAQ and RLNNPQKNEQPAASGN. Residues Ser40 and Ser50 each carry the phosphoserine modification. Basic and acidic residues predominate over residues 100 to 114; that stretch reads DSEKEQASLQKTEDT. Residues 124-374 form the Protein kinase domain; that stretch reads FDIGRPLGKG…LAEVLEHPWI (251 aa). Residues Lys134, Lys153, and 201–204 contribute to the ATP site; that span reads LEYA. The Proton acceptor role is filled by Asp247. Lys249 is covalently cross-linked (Glycyl lysine isopeptide (Lys-Gly) (interchain with G-Cter in SUMO2)). ATP-binding positions include 251-252 and Asp265; that span reads EN. Residues 271 to 284 form an activation segment region; the sequence is HAPSSRRTTMCGTL. Residues Thr278 and Thr279 each carry the phosphothreonine modification. The residue at position 333 (Ser333) is a Phosphoserine; by PKA and PAK. The span at 376-385 shows a compositional bias: polar residues; the sequence is ANSSKPPTGH. The tract at residues 376-395 is disordered; it reads ANSSKPPTGHTSKEPTSKSS. Residues 386–395 are compositionally biased toward basic and acidic residues; it reads TSKEPTSKSS.

Belongs to the protein kinase superfamily. Ser/Thr protein kinase family. Aurora subfamily. As to quaternary structure, part of a complex composed of NEDD9, AURKA and CTTN; within the complex NEDD9 acts as a scaffold protein and is required for complex formation. Identified in a complex with AUNIP and NIN. Interacts with CPEB1, JTB, TACC1, TPX2, PPP2CA, as well as with the protein phosphatase type 1 (PP1) isoforms PPP1CA, PPP1CB and PPP1CC. Also interacts with its substrates ARHGEF2, BORA, KIF2A, PARD3, and p53/TP53. Interaction with BORA promotes phosphorylation of PLK1. Interacts with GADD45A, competing with its oligomerization. Interacts with FBXL7 and CIMAP3. Interacts (via C-terminus) with AUNIP (via C-terminus). Interacts with SIRT2. Interacts with FRY; this interaction facilitates AURKA-mediated PLK1 phosphorylation. Interacts with MYCN; interaction is phospho-independent and triggers AURKA activation; AURKA competes with FBXW7 for binding to unphosphorylated MYCN but not for binding to phosphorylated MYCN. Interacts with HNRNPU. Interacts with AAAS. Interacts with KLHL18 and CUL3. Interacts with FOXP1. Interacts with HDAC6; AURKA-mediated phosphorylation of HDAC6 promotes deacetylation of alpha-tubulin. Activated by phosphorylation at Thr-279; this brings about a change in the conformation of the activation segment. Phosphorylation at Thr-279 varies during the cell cycle and is highest during M phase. Autophosphorylated at Thr-279 upon TPX2 binding. Thr-279 can be phosphorylated by several kinases, including PAK and PKA. Protein phosphatase type 1 (PP1) binds AURKA and inhibits its activity by dephosphorylating Thr-279 during mitosis. Phosphorylation at Ser-333 decreases the kinase activity. PPP2CA controls degradation by dephosphorylating Ser-52 at the end of mitosis. In terms of processing, ubiquitinated by the anaphase-promoting complex (APC), leading to its degradation by the proteasome. Ubiquitinated by CHFR, leading to its degradation by the proteasome. Ubiquitinated by the E3 ubiquitin-protein ligase complex SCF(FBXL7) during mitosis, leading to its degradation by the proteasome. As to expression, detected in embryonic neurons in dorsal root ganglia and brain cortex (at protein level). Highly expressed in testis, in about one third of the seminiferous tubules. Expression is restricted to specific spermatocytes nearing completion of prophase, with levels falling off on transition to elongated spermatids. Highly expressed in the ovary, expression in the oocyte starts around the transition to large growing follicle. Abundant expression is seen in the proliferating granulosa and thecal cells of the growing follicle, and in the young corpus luteum. Very weakly expressed in spleen and intestine.

The protein localises to the cytoplasm. It localises to the cytoskeleton. Its subcellular location is the microtubule organizing center. It is found in the centrosome. The protein resides in the spindle pole. The protein localises to the centriole. It localises to the cell projection. Its subcellular location is the neuron projection. It is found in the cilium. The protein resides in the cilium basal body. The protein localises to the basolateral cell membrane. The catalysed reaction is L-seryl-[protein] + ATP = O-phospho-L-seryl-[protein] + ADP + H(+). The enzyme catalyses L-threonyl-[protein] + ATP = O-phospho-L-threonyl-[protein] + ADP + H(+). With respect to regulation, activation of CDK1, appears to be an upstream event of AURKA activation. Phosphatase inhibitor-2 (PPP1R2) and TPX2 act also as activators. Inactivated by the G2 checkpoint. Inhibited by GADD45A and p53/TP53, and through dephosphorylation by protein phosphatase type 1 (PP1). MLN8054 is also a potent and selective inhibitor. Activated during the early phase of cilia disassembly in the presence of CIMAP3. Inhibited by the small molecule inhibitor VX-680. Its function is as follows. Mitotic serine/threonine kinase that contributes to the regulation of cell cycle progression. Associates with the centrosome and the spindle microtubules during mitosis and plays a critical role in various mitotic events including the establishment of mitotic spindle, centrosome duplication, centrosome separation as well as maturation, chromosomal alignment, spindle assembly checkpoint, and cytokinesis. Required for normal spindle positioning during mitosis and for the localization of NUMA1 and DCTN1 to the cell cortex during metaphase. Required for initial activation of CDK1 at centrosomes. Phosphorylates numerous target proteins, including ARHGEF2, BORA, BRCA1, CDC25B, DLGP5, HDAC6, KIF2A, LATS2, NDEL1, PARD3, PPP1R2, PLK1, RASSF1, TACC3, p53/TP53 and TPX2. Phosphorylates MCRS1 which is required for MCRS1-mediated kinetochore fiber assembly and mitotic progression. Regulates KIF2A tubulin depolymerase activity. Required for normal axon formation. Plays a role in microtubule remodeling during neurite extension. Important for microtubule formation and/or stabilization. Also acts as a key regulatory component of the p53/TP53 pathway, and particularly the checkpoint-response pathways critical for oncogenic transformation of cells, by phosphorylating and destabilizing p53/TP53. Phosphorylates its own inhibitors, the protein phosphatase type 1 (PP1) isoforms, to inhibit their activity. Inhibits cilia outgrowth. Required for cilia disassembly via phosphorylation of HDAC6 and subsequent deacetylation of alpha-tubulin. Regulates protein levels of the anti-apoptosis protein BIRC5 by suppressing the expression of the SCF(FBXL7) E3 ubiquitin-protein ligase substrate adapter FBXL7 through the phosphorylation of the transcription factor FOXP1. The polypeptide is Aurora kinase A (Aurka) (Mus musculus (Mouse)).